Here is a 149-residue protein sequence, read N- to C-terminus: MEVILLEKVRNLGNLGDKVHVKSGYGRNYLIPQNKAVFATEQNIELFQKRRAELEKKAQQALANAEQRAAKLNDTTIVISAMASDEGKLYGSVGVNEIKDALIEKQIEISKREIVMPEGPLHSIGNYVVEVHVHSDVVANLQVEIISAK.

The protein belongs to the bacterial ribosomal protein bL9 family.

Binds to the 23S rRNA. This Legionella pneumophila (strain Paris) protein is Large ribosomal subunit protein bL9.